A 450-amino-acid polypeptide reads, in one-letter code: Chromosomal replication initiator protein DnaA (450 aa).

Residues 1 to 79 (MENIHDLWNR…TGEELLIKFI (79 aa)) are domain I, interacts with DnaA modulators. A domain II region spans residues 79–111 (ITPPNQSEDDFEFQRSSKKHRKPYEESTDFPQS). A domain III, AAA+ region region spans residues 112–328 (MLNPKYTFDT…GALIRVVAYS (217 aa)). Positions 156, 158, 159, and 160 each coordinate ATP. Residues 329–450 (SLINKEITAD…KEIEEKLKQL (122 aa)) are domain IV, binds dsDNA.

It belongs to the DnaA family. Oligomerizes as a right-handed, spiral filament on DNA at oriC.

The protein localises to the cytoplasm. In terms of biological role, plays an essential role in the initiation and regulation of chromosomal replication. ATP-DnaA binds to the origin of replication (oriC) to initiate formation of the DNA replication initiation complex once per cell cycle. Binds the DnaA box (a 9 base pair repeat at the origin) and separates the double-stranded (ds)DNA. Forms a right-handed helical filament on oriC DNA; dsDNA binds to the exterior of the filament while single-stranded (ss)DNA is stabiized in the filament's interior. The ATP-DnaA-oriC complex binds and stabilizes one strand of the AT-rich DNA unwinding element (DUE), permitting loading of DNA polymerase. After initiation quickly degrades to an ADP-DnaA complex that is not apt for DNA replication. Binds acidic phospholipids. In Geobacillus sp. (strain WCH70), this protein is Chromosomal replication initiator protein DnaA.